The sequence spans 451 residues: Tryptophan--tRNA ligase (451 aa).

Residues 10-12 and 18-19 contribute to the ATP site; these read TTT and GN. The 'HIGH' region signature appears at 11 to 19; that stretch reads TTGTPHLGN. Residue Asp-143 coordinates L-tryptophan. ATP is bound by residues 155-157, Leu-195, and 202-206; these read GRD and KMSKS. The 'KMSKS' region motif lies at 202–206; sequence KMSKS.

The protein belongs to the class-I aminoacyl-tRNA synthetase family. As to quaternary structure, homodimer.

It is found in the cytoplasm. It catalyses the reaction tRNA(Trp) + L-tryptophan + ATP = L-tryptophyl-tRNA(Trp) + AMP + diphosphate + H(+). In terms of biological role, catalyzes the attachment of tryptophan to tRNA(Trp). The sequence is that of Tryptophan--tRNA ligase from Bordetella bronchiseptica (strain ATCC BAA-588 / NCTC 13252 / RB50) (Alcaligenes bronchisepticus).